The chain runs to 605 residues: Aspartate--tRNA(Asp/Asn) ligase (605 aa).

Position 183 (E183) interacts with L-aspartate. The interval 207–210 (QLYK) is aspartate. Position 229 (R229) interacts with L-aspartate. Residues 229-231 (RDE) and Q238 contribute to the ATP site. An L-aspartate-binding site is contributed by H456. E490 lines the ATP pocket. Residue R497 coordinates L-aspartate. 542 to 545 (GLDR) lines the ATP pocket.

Belongs to the class-II aminoacyl-tRNA synthetase family. Type 1 subfamily. In terms of assembly, homodimer.

Its subcellular location is the cytoplasm. It catalyses the reaction tRNA(Asx) + L-aspartate + ATP = L-aspartyl-tRNA(Asx) + AMP + diphosphate. Aspartyl-tRNA synthetase with relaxed tRNA specificity since it is able to aspartylate not only its cognate tRNA(Asp) but also tRNA(Asn). Reaction proceeds in two steps: L-aspartate is first activated by ATP to form Asp-AMP and then transferred to the acceptor end of tRNA(Asp/Asn). This chain is Aspartate--tRNA(Asp/Asn) ligase, found in Heliobacterium modesticaldum (strain ATCC 51547 / Ice1).